A 326-amino-acid chain; its full sequence is Eukaryotic translation initiation factor 3 subunit I (326 aa).

5 WD repeats span residues 8 to 47 (GHER…RLGT), 50 to 89 (GHQG…VIAS), 145 to 184 (MTES…KVVD), 188 to 227 (DHSA…CLKT), and 285 to 326 (GHFG…NIFE).

This sequence belongs to the eIF-3 subunit I family. Component of the eukaryotic translation initiation factor 3 (eIF-3) complex. The eIF-3 complex interacts with pix.

It localises to the cytoplasm. Component of the eukaryotic translation initiation factor 3 (eIF-3) complex, which is involved in protein synthesis of a specialized repertoire of mRNAs and, together with other initiation factors, stimulates binding of mRNA and methionyl-tRNAi to the 40S ribosome. The eIF-3 complex specifically targets and initiates translation of a subset of mRNAs involved in cell proliferation. In Drosophila simulans (Fruit fly), this protein is Eukaryotic translation initiation factor 3 subunit I.